Here is a 238-residue protein sequence, read N- to C-terminus: MAFTFKQFHIDDLNCGMAVSTDAVVLGAWAPLTNAKQILDIGAGSGILGLMAAQRSQANITCIELDDTAAIACQHNIAQSPWASRIRLVQGSIQQLSQAEEYQGYFDHIICNPPYFEHGPQAQLSQRAMARHTDQLSFNELLAAIEQCLSPNGLASLILPIQSLHNFNHLLSQSRLEWVERVDIKSVEGKRANRVLCLLTAQTHRTVEPKVSELTLRDTSGQYSQAMVHLTQDFYLKL.

The protein belongs to the methyltransferase superfamily. tRNA (adenine-N(6)-)-methyltransferase family.

It is found in the cytoplasm. The enzyme catalyses adenosine(37) in tRNA1(Val) + S-adenosyl-L-methionine = N(6)-methyladenosine(37) in tRNA1(Val) + S-adenosyl-L-homocysteine + H(+). Functionally, specifically methylates the adenine in position 37 of tRNA(1)(Val) (anticodon cmo5UAC). The sequence is that of tRNA1(Val) (adenine(37)-N6)-methyltransferase from Shewanella sp. (strain W3-18-1).